Consider the following 138-residue polypeptide: Thyrotropin subunit beta (138 aa).

A signal peptide spans 1-20 (MTALFLMSMLFGLTCGQAMS). 6 disulfide bridges follow: Cys-22/Cys-72, Cys-36/Cys-87, Cys-39/Cys-125, Cys-47/Cys-103, Cys-51/Cys-105, and Cys-108/Cys-115. The N-linked (GlcNAc...) asparagine glycan is linked to Asn-43. Positions 133-138 (LVGFSV) are excised as a propeptide.

This sequence belongs to the glycoprotein hormones subunit beta family. Heterodimer of a common alpha chain and a unique beta chain which confers biological specificity to thyrotropin, lutropin, follitropin and gonadotropin.

It localises to the secreted. Functionally, indispensable for the control of thyroid structure and metabolism. The polypeptide is Thyrotropin subunit beta (TSHB) (Homo sapiens (Human)).